A 150-amino-acid chain; its full sequence is UPF0178 protein BamMC406_1579 (150 aa).

This sequence belongs to the UPF0178 family.

The protein is UPF0178 protein BamMC406_1579 of Burkholderia ambifaria (strain MC40-6).